A 502-amino-acid chain; its full sequence is UDP-N-acetylmuramate--L-alanine ligase (502 aa).

119–125 (GSHGKST) contributes to the ATP binding site.

Belongs to the MurCDEF family.

It localises to the cytoplasm. The enzyme catalyses UDP-N-acetyl-alpha-D-muramate + L-alanine + ATP = UDP-N-acetyl-alpha-D-muramoyl-L-alanine + ADP + phosphate + H(+). Its pathway is cell wall biogenesis; peptidoglycan biosynthesis. In terms of biological role, cell wall formation. In Frankia casuarinae (strain DSM 45818 / CECT 9043 / HFP020203 / CcI3), this protein is UDP-N-acetylmuramate--L-alanine ligase.